Here is a 161-residue protein sequence, read N- to C-terminus: Long arms of the bivalent protein 1 (161 aa).

Positions 72 to 75 (KVIW) match the PP1 binding motif motif. The tract at residues 85–161 (GTMFEDFKED…SDKTMCSGQS (77 aa)) is disordered. Polar residues predominate over residues 97-115 (QESVSSISNNEANWGSSVN). Over residues 120-129 (NYEKMQKEET) the composition is skewed to basic and acidic residues. The span at 130-151 (FDPYDSDSDTSEDSDFDEDFED) shows a compositional bias: acidic residues.

Interacts with gsp-1 and gsp-2; the interaction is direct.

It localises to the chromosome. It is found in the nucleus. Its function is as follows. Involved in sister chromatid cohesion during mitosis and meiosis. In association with the gsp-2 phosphatase, it both restricts the localization and antagonizes the function of the air-2 kinase during meiosis I and mitosis to promote chromatid cohesion and spindle attachment. This in turn, drives germ cell immortality. Furthermore, may play a role in ensuring the timely assembly of the synaptonemal complex during prophase I of meiosis. This Caenorhabditis elegans protein is Long arms of the bivalent protein 1.